Here is a 389-residue protein sequence, read N- to C-terminus: Sulfate adenylyltransferase (389 aa).

This sequence belongs to the sulfate adenylyltransferase family.

The catalysed reaction is sulfate + ATP + H(+) = adenosine 5'-phosphosulfate + diphosphate. It participates in sulfur metabolism; hydrogen sulfide biosynthesis; sulfite from sulfate: step 1/3. The protein is Sulfate adenylyltransferase of Desulforamulus reducens (strain ATCC BAA-1160 / DSM 100696 / MI-1) (Desulfotomaculum reducens).